The chain runs to 196 residues: Probable malonic semialdehyde reductase RutE (196 aa).

This sequence belongs to the nitroreductase family. HadB/RutE subfamily. FMN serves as cofactor.

The catalysed reaction is 3-hydroxypropanoate + NADP(+) = 3-oxopropanoate + NADPH + H(+). May reduce toxic product malonic semialdehyde to 3-hydroxypropionic acid, which is excreted. In Shigella sonnei (strain Ss046), this protein is Probable malonic semialdehyde reductase RutE.